A 202-amino-acid polypeptide reads, in one-letter code: Secreted RxLR effector protein 93 (202 aa).

A signal peptide spans 1–16 (MRFYLTKLFAAAGALA). The interval 29-58 (TPVSPLSRSSDHHQSDDSTQRRLRTLNGAD) is disordered. Positions 37–48 (SSDHHQSDDSTQ) are enriched in basic and acidic residues. The RxLR-dEER signature appears at 49–61 (RRLRTLNGADEER).

This sequence belongs to the RxLR effector family.

It is found in the secreted. The protein localises to the host nucleus. In terms of biological role, secreted effector that completely suppresses the host cell death induced by cell death-inducing proteins. The chain is Secreted RxLR effector protein 93 from Plasmopara viticola (Downy mildew of grapevine).